Reading from the N-terminus, the 620-residue chain is Chaperone protein HscA homolog (620 aa).

Belongs to the heat shock protein 70 family.

Its function is as follows. Chaperone involved in the maturation of iron-sulfur cluster-containing proteins. Has a low intrinsic ATPase activity which is markedly stimulated by HscB. The protein is Chaperone protein HscA homolog of Janthinobacterium sp. (strain Marseille) (Minibacterium massiliensis).